Reading from the N-terminus, the 240-residue chain is Cell division control protein 14 (240 aa).

Interacts with sid1.

Its subcellular location is the cytoplasm. It localises to the cytoskeleton. It is found in the microtubule organizing center. The protein localises to the spindle pole body. Its function is as follows. Has a role in the septation initiation network (SIN) required for cytokinesis. The polypeptide is Cell division control protein 14 (cdc14) (Schizosaccharomyces pombe (strain 972 / ATCC 24843) (Fission yeast)).